Reading from the N-terminus, the 411-residue chain is Exodeoxyribonuclease 7 large subunit (411 aa).

Belongs to the XseA family. As to quaternary structure, heterooligomer composed of large and small subunits.

It is found in the cytoplasm. The catalysed reaction is Exonucleolytic cleavage in either 5'- to 3'- or 3'- to 5'-direction to yield nucleoside 5'-phosphates.. In terms of biological role, bidirectionally degrades single-stranded DNA into large acid-insoluble oligonucleotides, which are then degraded further into small acid-soluble oligonucleotides. The chain is Exodeoxyribonuclease 7 large subunit from Mycobacterium sp. (strain KMS).